The following is a 129-amino-acid chain: Large ribosomal subunit protein uL22 (129 aa).

It belongs to the universal ribosomal protein uL22 family. As to quaternary structure, part of the 50S ribosomal subunit.

Functionally, this protein binds specifically to 23S rRNA; its binding is stimulated by other ribosomal proteins, e.g. L4, L17, and L20. It is important during the early stages of 50S assembly. It makes multiple contacts with different domains of the 23S rRNA in the assembled 50S subunit and ribosome. In terms of biological role, the globular domain of the protein is located near the polypeptide exit tunnel on the outside of the subunit, while an extended beta-hairpin is found that lines the wall of the exit tunnel in the center of the 70S ribosome. The chain is Large ribosomal subunit protein uL22 from Sinorhizobium medicae (strain WSM419) (Ensifer medicae).